The primary structure comprises 433 residues: Ribosomal protein uS12 methylthiotransferase RimO (433 aa).

The 117-residue stretch at 6–122 folds into the MTTase N-terminal domain; that stretch reads QSIFLLSLGC…IISVLGGSYR (117 aa). Positions 15, 51, 85, 146, 150, and 153 each coordinate [4Fe-4S] cluster. The Radical SAM core domain occupies 132-362; that stretch reads LTPPHYAWLK…MELQESIAAE (231 aa). The TRAM domain occupies 365–432; sequence RELEGRVMKV…AYELHGRVND (68 aa).

Belongs to the methylthiotransferase family. RimO subfamily. Requires [4Fe-4S] cluster as cofactor.

The protein resides in the cytoplasm. The catalysed reaction is L-aspartate(89)-[ribosomal protein uS12]-hydrogen + (sulfur carrier)-SH + AH2 + 2 S-adenosyl-L-methionine = 3-methylsulfanyl-L-aspartate(89)-[ribosomal protein uS12]-hydrogen + (sulfur carrier)-H + 5'-deoxyadenosine + L-methionine + A + S-adenosyl-L-homocysteine + 2 H(+). In terms of biological role, catalyzes the methylthiolation of an aspartic acid residue of ribosomal protein uS12. The chain is Ribosomal protein uS12 methylthiotransferase RimO from Prosthecochloris aestuarii (strain DSM 271 / SK 413).